Consider the following 598-residue polypeptide: Fructan 6-exohydrolase (598 aa).

An N-terminal signal peptide occupies residues 1–30 (MAARLPLAACVVAFHLCLLLSSLVRSPSTA). The active site involves Asp-65. Asn-93, Asn-288, and Asn-351 each carry an N-linked (GlcNAc...) asparagine glycan. Cys-451 and Cys-497 are joined by a disulfide. A glycan (N-linked (GlcNAc...) asparagine) is linked at Asn-572.

Belongs to the glycosyl hydrolase 32 family. As to expression, expressed in leaves, stems, roots and inflorescences. Maximum expression is detected in stems, particularly the penultimate internode.

It catalyses the reaction Hydrolysis of terminal, non-reducing (2-&gt;6)-linked beta-D-fructofuranose residues in fructans.. Its activity is regulated as follows. Not inhibited by sucrose. Its function is as follows. Hydrolyzes levan-type beta-(2-&gt;6)-linked fructans to fructose, but not inulin-type beta-(2-&gt;1)-linked fructans. The protein is Fructan 6-exohydrolase of Triticum aestivum (Wheat).